The chain runs to 402 residues: UDP-glucose 6-dehydrogenase (402 aa).

NAD(+) contacts are provided by residues 2–19 (KIAVAGSGYVGLSLGVLL), V11, D29, K34, T83, T118, and E145. Residues 141–145 (EFLRE), K204, N208, 249–253 (YNNPS), and G257 contribute to the substrate site. Y259 lines the NAD(+) pocket. The active-site Nucleophile is C260. An NAD(+)-binding site is contributed by K263. Residue K320 participates in substrate binding. Residue R327 coordinates NAD(+).

The protein belongs to the UDP-glucose/GDP-mannose dehydrogenase family.

It catalyses the reaction UDP-alpha-D-glucose + 2 NAD(+) + H2O = UDP-alpha-D-glucuronate + 2 NADH + 3 H(+). Its pathway is nucleotide-sugar biosynthesis; UDP-alpha-D-glucuronate biosynthesis; UDP-alpha-D-glucuronate from UDP-alpha-D-glucose: step 1/1. Catalyzes the formation of UDP-glucuronic acid which is required for capsular hyaluronic acid synthesis. The chain is UDP-glucose 6-dehydrogenase (hasB) from Streptococcus pyogenes serotype M3 (strain ATCC BAA-595 / MGAS315).